We begin with the raw amino-acid sequence, 962 residues long: Glycine dehydrogenase (decarboxylating) (962 aa).

N6-(pyridoxal phosphate)lysine is present on Lys-709.

This sequence belongs to the GcvP family. In terms of assembly, the glycine cleavage system is composed of four proteins: P, T, L and H. It depends on pyridoxal 5'-phosphate as a cofactor.

The enzyme catalyses N(6)-[(R)-lipoyl]-L-lysyl-[glycine-cleavage complex H protein] + glycine + H(+) = N(6)-[(R)-S(8)-aminomethyldihydrolipoyl]-L-lysyl-[glycine-cleavage complex H protein] + CO2. In terms of biological role, the glycine cleavage system catalyzes the degradation of glycine. The P protein binds the alpha-amino group of glycine through its pyridoxal phosphate cofactor; CO(2) is released and the remaining methylamine moiety is then transferred to the lipoamide cofactor of the H protein. This Shewanella sp. (strain ANA-3) protein is Glycine dehydrogenase (decarboxylating).